The primary structure comprises 815 residues: DNA topoisomerase 1 (815 aa).

One can recognise a Toprim domain in the interval 3 to 119; it reads KHLLIVESPA…QRIVFTEITP (117 aa). The Mg(2+) site is built by glutamate 9 and aspartate 82. Residues 133 to 573 form the Topo IA-type catalytic domain; sequence ASDLVDAQQA…KFWVPFKELV (441 aa). Positions 167 to 172 are interaction with DNA; it reads SAGRVQ. Tyrosine 308 serves as the catalytic O-(5'-phospho-DNA)-tyrosine intermediate. A disordered region spans residues 760–815; the sequence is GKPARKNFSTKKTATKNETRKQTTKKRTTDAKATKKVSDKPVKKQIKKRIAPNITE. Basic and acidic residues predominate over residues 774 to 801; the sequence is TKNETRKQTTKKRTTDAKATKKVSDKPV.

Belongs to the type IA topoisomerase family. Monomer. Mg(2+) is required as a cofactor.

It catalyses the reaction ATP-independent breakage of single-stranded DNA, followed by passage and rejoining.. Releases the supercoiling and torsional tension of DNA, which is introduced during the DNA replication and transcription, by transiently cleaving and rejoining one strand of the DNA duplex. Introduces a single-strand break via transesterification at a target site in duplex DNA. The scissile phosphodiester is attacked by the catalytic tyrosine of the enzyme, resulting in the formation of a DNA-(5'-phosphotyrosyl)-enzyme intermediate and the expulsion of a 3'-OH DNA strand. The free DNA strand then undergoes passage around the unbroken strand, thus removing DNA supercoils. Finally, in the religation step, the DNA 3'-OH attacks the covalent intermediate to expel the active-site tyrosine and restore the DNA phosphodiester backbone. The sequence is that of DNA topoisomerase 1 from Xylella fastidiosa (strain 9a5c).